The primary structure comprises 218 residues: Sodium channel regulatory subunit beta-1 (218 aa).

The N-terminal stretch at 1-18 (MGRLLAFVVGAALVSSAW) is a signal peptide. The Extracellular portion of the chain corresponds to 19–157 (GGCVEVDSET…DKANRDMASI (139 aa)). 2 disulfides stabilise this stretch: cysteine 21–cysteine 43 and cysteine 40–cysteine 121. The region spanning 22–150 (VEVDSETEAV…KIHLEVVDKA (129 aa)) is the Ig-like C2-type domain. N-linked (GlcNAc...) asparagine glycosylation is found at asparagine 93, asparagine 110, asparagine 114, and asparagine 135. The chain crosses the membrane as a helical span at residues 158–179 (VSEIMMYVLIVVLTIWLVAEMV). The Cytoplasmic portion of the chain corresponds to 180-218 (YCYKKIAAATEAAAQENASEYLAITSESKENCTGVQVAE).

It belongs to the sodium channel auxiliary subunit SCN1B (TC 8.A.17) family. As to quaternary structure, a voltage-gated sodium (Nav) channel consists of an ion-conducting pore-forming alpha subunit functional on its own that is regulated by one or more beta subunits. Interacts with SCN1A; regulatory subunit of SCN1A/Nav1.1. Interacts with SCN3A; regulatory subunit of SCN3A/Nav1.3. Interacts with SCN4A; regulatory subunit of SCN4A/Nav1.4. Interacts with SCN5A; regulatory subunit of SCN5A/Nav1.5. Interacts with SCN8A; regulatory subunit of SCN8A/Nav1.6. Interacts with SCN9A; regulatory subunit of SCN9A/Nav1.7. Interacts with SCN10A; regulatory subunit of SCN10A/Nav1.8. Interacts with NFASC. Interacts with TMEM65.

The protein resides in the cell membrane. It localises to the perikaryon. The protein localises to the cell projection. Its subcellular location is the axon. In terms of biological role, regulatory subunit of multiple voltage-gated sodium (Nav) channels directly mediating the depolarization of excitable membranes. Navs, also called VGSCs (voltage-gated sodium channels) or VDSCs (voltage-dependent sodium channels), operate by switching between closed and open conformations depending on the voltage difference across the membrane. In the open conformation they allow Na(+) ions to selectively pass through the pore, along their electrochemical gradient. The influx of Na+ ions provokes membrane depolarization, initiating the propagation of electrical signals throughout cells and tissues. The accessory beta subunits participate in localization and functional modulation of the Nav channels. Modulates the activity of SCN1A/Nav1.1, SCN2A/Nav1.2, SCN3A/Nav1.3, SCN4A/Nav1.4, SCN5A/Nav1.5, SCN8A/Nav1.6, SCN9A/Nav1.7 and SCN10A/Nav1.8. This is Sodium channel regulatory subunit beta-1 from Oryctolagus cuniculus (Rabbit).